Reading from the N-terminus, the 208-residue chain is Crossover junction endodeoxyribonuclease RuvC (208 aa).

Residues Asp-9, Glu-70, and Asp-143 contribute to the active site. Positions 9, 70, and 143 each coordinate Mg(2+).

The protein belongs to the RuvC family. As to quaternary structure, homodimer which binds Holliday junction (HJ) DNA. The HJ becomes 2-fold symmetrical on binding to RuvC with unstacked arms; it has a different conformation from HJ DNA in complex with RuvA. In the full resolvosome a probable DNA-RuvA(4)-RuvB(12)-RuvC(2) complex forms which resolves the HJ. Mg(2+) is required as a cofactor.

The protein localises to the cytoplasm. The catalysed reaction is Endonucleolytic cleavage at a junction such as a reciprocal single-stranded crossover between two homologous DNA duplexes (Holliday junction).. Its function is as follows. The RuvA-RuvB-RuvC complex processes Holliday junction (HJ) DNA during genetic recombination and DNA repair. Endonuclease that resolves HJ intermediates. Cleaves cruciform DNA by making single-stranded nicks across the HJ at symmetrical positions within the homologous arms, yielding a 5'-phosphate and a 3'-hydroxyl group; requires a central core of homology in the junction. The consensus cleavage sequence is 5'-(A/T)TT(C/G)-3'. Cleavage occurs on the 3'-side of the TT dinucleotide at the point of strand exchange. HJ branch migration catalyzed by RuvA-RuvB allows RuvC to scan DNA until it finds its consensus sequence, where it cleaves and resolves the cruciform DNA. In Leifsonia xyli subsp. xyli (strain CTCB07), this protein is Crossover junction endodeoxyribonuclease RuvC.